The primary structure comprises 78 residues: D-alanyl carrier protein (78 aa).

In terms of domain architecture, Carrier spans 1-78; the sequence is MEFREQVLDL…KIVEALEELR (78 aa). Ser36 bears the O-(pantetheine 4'-phosphoryl)serine mark.

It belongs to the DltC family. 4'-phosphopantetheine is transferred from CoA to a specific serine of apo-DCP.

It localises to the cytoplasm. The protein operates within cell wall biogenesis; lipoteichoic acid biosynthesis. In terms of biological role, carrier protein involved in the D-alanylation of lipoteichoic acid (LTA). The loading of thioester-linked D-alanine onto DltC is catalyzed by D-alanine--D-alanyl carrier protein ligase DltA. The DltC-carried D-alanyl group is further transferred to cell membrane phosphatidylglycerol (PG) by forming an ester bond, probably catalyzed by DltD. D-alanylation of LTA plays an important role in modulating the properties of the cell wall in Gram-positive bacteria, influencing the net charge of the cell wall. The chain is D-alanyl carrier protein from Staphylococcus epidermidis (strain ATCC 35984 / DSM 28319 / BCRC 17069 / CCUG 31568 / BM 3577 / RP62A).